An 85-amino-acid chain; its full sequence is U4-theraphotoxin-Hhn1r (85 aa).

A signal peptide spans 1 to 22 (MKVTLIAILTCAAVLVLHTTAA). The propeptide occupies 23-48 (EELEAESQLMEVGMPDTELAAVDEER). 3 disulfide bridges follow: cysteine 52-cysteine 66, cysteine 56-cysteine 77, and cysteine 71-cysteine 82.

Belongs to the neurotoxin 12 (Hwtx-2) family. 02 (Hwtx-2) subfamily. In terms of tissue distribution, expressed by the venom gland.

The protein resides in the secreted. Functionally, postsynaptic neurotoxin. The polypeptide is U4-theraphotoxin-Hhn1r (Cyriopagopus hainanus (Chinese bird spider)).